A 502-amino-acid polypeptide reads, in one-letter code: Glycerol kinase (502 aa).

Thr-14 is a binding site for ADP. ATP-binding residues include Thr-14, Thr-15, and Ser-16. Residue Thr-14 coordinates sn-glycerol 3-phosphate. ADP is bound at residue Arg-18. Residues Arg-84, Glu-85, Tyr-136, and Asp-246 each contribute to the sn-glycerol 3-phosphate site. The glycerol site is built by Arg-84, Glu-85, Tyr-136, Asp-246, and Gln-247. ADP contacts are provided by Thr-268 and Gly-311. 4 residues coordinate ATP: Thr-268, Gly-311, Gln-315, and Gly-412. Residues Gly-412 and Asn-416 each coordinate ADP.

It belongs to the FGGY kinase family. Homotetramer and homodimer (in equilibrium). Heterodimer with EIIA-Glc. Binds 1 zinc ion per glycerol kinase EIIA-Glc dimer. The zinc ion is important for dimerization.

It catalyses the reaction glycerol + ATP = sn-glycerol 3-phosphate + ADP + H(+). The protein operates within polyol metabolism; glycerol degradation via glycerol kinase pathway; sn-glycerol 3-phosphate from glycerol: step 1/1. Its activity is regulated as follows. Activity of this regulatory enzyme is affected by several metabolites. Allosterically and non-competitively inhibited by fructose 1,6-bisphosphate (FBP) and unphosphorylated phosphocarrier protein EIIA-Glc (III-Glc), an integral component of the bacterial phosphotransferase (PTS) system. Functionally, key enzyme in the regulation of glycerol uptake and metabolism. Catalyzes the phosphorylation of glycerol to yield sn-glycerol 3-phosphate. The polypeptide is Glycerol kinase (Salmonella typhimurium (strain LT2 / SGSC1412 / ATCC 700720)).